The following is a 202-amino-acid chain: Large ribosomal subunit protein bL9 (202 aa).

Positions 168-202 (DEAGFTEDYDPNAEPGEIPTELQDEAPAAEATDEA) are disordered. Residues 192-202 (EAPAAEATDEA) show a composition bias toward low complexity.

This sequence belongs to the bacterial ribosomal protein bL9 family.

In terms of biological role, binds to the 23S rRNA. In Rhizorhabdus wittichii (strain DSM 6014 / CCUG 31198 / JCM 15750 / NBRC 105917 / EY 4224 / RW1) (Sphingomonas wittichii), this protein is Large ribosomal subunit protein bL9.